Here is a 1076-residue protein sequence, read N- to C-terminus: Zinc-regulated protein 8 (1076 aa).

A compositionally biased stretch (basic residues) spans 1 to 11 (MRSFIKAHKKS). Disordered stretches follow at residues 1–66 (MRSF…PGFE), 85–162 (SNLN…RTTD), 190–223 (PASP…TSPS), and 234–253 (KNKG…SSKK). Polar residues predominate over residues 23–34 (NFSGNTNNSSQR). A compositionally biased stretch (low complexity) spans 93 to 106 (STPTTSTNQTTSNS). Positions 107–117 (FVLQNPPTKNT) are enriched in polar residues. Positions 118-128 (GPPPPLPPPLF) are enriched in pro residues. Composition is skewed to polar residues over residues 193-206 (PASN…SKQF) and 214-223 (ENLTSTTSPS). Phosphoserine occurs at positions 275 and 354. 3 disordered regions span residues 357 to 450 (IRHG…DDES), 534 to 557 (LSDD…ESDN), and 566 to 585 (GKET…SLGE). Residues 362–378 (LQSSPSKVNKNDSQNET) are compositionally biased toward polar residues. 2 positions are modified to phosphoserine: S403 and S407. Residues 408–418 (VNEKETHKAND) are compositionally biased toward basic and acidic residues. Acidic residues predominate over residues 419-450 (CNDESSENGDGDNDHDDDYDDDDDDDDDDDES). Residues 576-585 (GHHDDASLGE) are compositionally biased toward basic and acidic residues. A phosphoserine mark is found at S632 and S676. Disordered stretches follow at residues 658 to 701 (NIIR…KPTV), 713 to 762 (SASD…PHSQ), 909 to 931 (RRTL…FSSV), 1000 to 1020 (HNVG…QISN), and 1042 to 1076 (PTNS…PKRA). 2 stretches are compositionally biased toward polar residues: residues 690 to 701 (LTGTTGSTKPTV) and 739 to 748 (QVSLQSSLYE).

The protein belongs to the ZRG8 family. Interacts with BUD27, GIS1 and SSD1.

It localises to the cytoplasm. It is found in the bud. Its subcellular location is the bud neck. The protein resides in the bud tip. Its function is as follows. Involved in the integrity functions of RAM, a conserved signaling network that regulates maintenance of polarized growth and daughter-cell-specific transcription. The protein is Zinc-regulated protein 8 (ZRG8) of Saccharomyces cerevisiae (strain ATCC 204508 / S288c) (Baker's yeast).